The following is a 289-amino-acid chain: ATP phosphoribosyltransferase (289 aa).

It belongs to the ATP phosphoribosyltransferase family. Long subfamily. Mg(2+) serves as cofactor.

It is found in the cytoplasm. It carries out the reaction 1-(5-phospho-beta-D-ribosyl)-ATP + diphosphate = 5-phospho-alpha-D-ribose 1-diphosphate + ATP. The protein operates within amino-acid biosynthesis; L-histidine biosynthesis; L-histidine from 5-phospho-alpha-D-ribose 1-diphosphate: step 1/9. With respect to regulation, feedback inhibited by histidine. Functionally, catalyzes the condensation of ATP and 5-phosphoribose 1-diphosphate to form N'-(5'-phosphoribosyl)-ATP (PR-ATP). Has a crucial role in the pathway because the rate of histidine biosynthesis seems to be controlled primarily by regulation of HisG enzymatic activity. This Desulforudis audaxviator (strain MP104C) protein is ATP phosphoribosyltransferase.